Reading from the N-terminus, the 159-residue chain is Protransforming growth factor alpha (159 aa).

Residues 1–23 form the signal peptide; the sequence is MVPAAGQLALLALGILVAVCQAL. The propeptide at 24 to 38 is removed in mature form; sequence ENSTSPLSDSPVAAA. Residues 24–97 are Extracellular-facing; sequence ENSTSPLSDS…AVVAASQKKQ (74 aa). N-linked (GlcNAc...) asparagine glycosylation occurs at asparagine 25. Residues 42-82 enclose the EGF-like domain; it reads HFNKCPDSHTQYCFHGTCRFLVQEEKPACVCHSGYVGVRCE. Disulfide bonds link cysteine 46/cysteine 59, cysteine 54/cysteine 70, and cysteine 72/cysteine 81. The propeptide at 89–159 is removed in mature form; sequence VVAASQKKQA…TACCHSETVV (71 aa). A helical transmembrane segment spans residues 98–123; it reads AITALVVVSIVALAVLIITCVLIHCC. Residues 124–159 are Cytoplasmic-facing; sequence QVRKHCEWCRALVCRHEKPSALLKGRTACCHSETVV. S-palmitoyl cysteine attachment occurs at residues cysteine 152 and cysteine 153.

As to quaternary structure, interacts with the PDZ domains of MAGI3, SDCBP and SNTA1. The interaction with SDCBP, is required for the targeting to the cell surface. In the endoplasmic reticulum, in its immature form (i.e. with a prosegment and lacking full N-glycosylation), interacts with CNIH. In the Golgi apparatus, may form a complex with CNIH and GORASP2. Interacts (via cytoplasmic C-terminal domain) with NKD2.

Its subcellular location is the secreted. The protein resides in the extracellular space. It is found in the cell membrane. Its function is as follows. TGF alpha is a mitogenic polypeptide that is able to bind to the EGF receptor/EGFR and to act synergistically with TGF beta to promote anchorage-independent cell proliferation in soft agar. In Rattus norvegicus (Rat), this protein is Protransforming growth factor alpha (Tgfa).